Reading from the N-terminus, the 59-residue chain is Large ribosomal subunit protein bL32 (59 aa).

A compositionally biased stretch (basic residues) spans methionine 1–histidine 19. Residues methionine 1–aspartate 20 form a disordered region.

The protein belongs to the bacterial ribosomal protein bL32 family.

The chain is Large ribosomal subunit protein bL32 from Maridesulfovibrio salexigens (strain ATCC 14822 / DSM 2638 / NCIMB 8403 / VKM B-1763) (Desulfovibrio salexigens).